The primary structure comprises 255 residues: Imidazole glycerol phosphate synthase subunit HisF (255 aa).

Residues Asp-12 and Asp-131 contribute to the active site.

The protein belongs to the HisA/HisF family. Heterodimer of HisH and HisF.

It localises to the cytoplasm. It catalyses the reaction 5-[(5-phospho-1-deoxy-D-ribulos-1-ylimino)methylamino]-1-(5-phospho-beta-D-ribosyl)imidazole-4-carboxamide + L-glutamine = D-erythro-1-(imidazol-4-yl)glycerol 3-phosphate + 5-amino-1-(5-phospho-beta-D-ribosyl)imidazole-4-carboxamide + L-glutamate + H(+). It functions in the pathway amino-acid biosynthesis; L-histidine biosynthesis; L-histidine from 5-phospho-alpha-D-ribose 1-diphosphate: step 5/9. Functionally, IGPS catalyzes the conversion of PRFAR and glutamine to IGP, AICAR and glutamate. The HisF subunit catalyzes the cyclization activity that produces IGP and AICAR from PRFAR using the ammonia provided by the HisH subunit. The sequence is that of Imidazole glycerol phosphate synthase subunit HisF from Zymomonas mobilis subsp. mobilis (strain ATCC 31821 / ZM4 / CP4).